Here is a 482-residue protein sequence, read N- to C-terminus: BTB/POZ domain-containing protein 6-B (482 aa).

The BTB domain maps to 80–150; that stretch reads ADVHFVVGPP…MYSDEIELEA (71 aa).

In terms of assembly, interacts with cul3. Interacts (via BTB domain) with zbtb16/plzf. As to expression, in embryos, expressed in the cranial ganglia.

It localises to the cytoplasm. Its subcellular location is the nucleus. Functionally, adapter protein for the cul3 E3 ubiquitin-protein ligase complex. Promotes the export of zbtb16/plzf from the nucleus to the cytoplasm and targets zbtb16/plzf for ubiquitination and degradation. Up-regulates neurog1 expression and antagonizes zbtb16/plzf, to promote neurogenesis. The sequence is that of BTB/POZ domain-containing protein 6-B (btbd6b) from Danio rerio (Zebrafish).